We begin with the raw amino-acid sequence, 292 residues long: Hemin import ATP-binding protein HmuV (292 aa).

An ABC transporter domain is found at 38–271; the sequence is LRADGIAVTR…ELLTRVYGHP (234 aa). 70–77 provides a ligand contact to ATP; that stretch reads GPNGAGKS.

It belongs to the ABC transporter superfamily. Heme (hemin) importer (TC 3.A.1.14.5) family. The complex is composed of two ATP-binding proteins (HmuV), two transmembrane proteins (HmuU) and a solute-binding protein (HmuT).

The protein localises to the cell membrane. In terms of biological role, part of the ABC transporter complex HmuTUV involved in hemin import. Responsible for energy coupling to the transport system. This is Hemin import ATP-binding protein HmuV from Rhodococcus jostii (strain RHA1).